A 92-amino-acid chain; its full sequence is MASPGHILIVCVCLLSMASAEAPQEPDPFTYDYHTLRIGGLTIAGILFILGILIILSKRCRCKFNQQQRTGEPDEEEGTFRSSIRRLSTRRR.

The N-terminal stretch at 1-20 is a signal peptide; it reads MASPGHILIVCVCLLSMASA. Residues 21–35 are Extracellular-facing; that stretch reads EAPQEPDPFTYDYHT. Residues 36–56 form a helical membrane-spanning segment; that stretch reads LRIGGLTIAGILFILGILIIL. Over 57-92 the chain is Cytoplasmic; the sequence is SKRCRCKFNQQQRTGEPDEEEGTFRSSIRRLSTRRR. A lipid anchor (S-palmitoyl cysteine) is attached at Cys-60. Cys-62 is subject to S-glutathionyl cysteine; alternate. The S-palmitoyl cysteine; alternate moiety is linked to residue Cys-62. Residues 66–92 are disordered; sequence QQQRTGEPDEEEGTFRSSIRRLSTRRR. Phosphothreonine is present on Thr-79. At Ser-82 the chain carries Phosphoserine. Residue Ser-83 is modified to Phosphoserine; by PKA and PKC. The segment covering 83–92 has biased composition (basic residues); it reads SIRRLSTRRR. Ser-88 carries the phosphoserine; by PKA modification. Thr-89 is subject to Phosphothreonine; by PKC.

Belongs to the FXYD family. Homotetramer. Monomer. Regulatory subunit of the sodium/potassium-transporting ATPase (NKA) which is composed of a catalytic alpha subunit, a non-catalytic beta subunit and an additional regulatory subunit. The monomeric form associates with NKA while the oligomeric form does not. Interacts with the catalytic alpha-1 subunit ATP1A1. Also interacts with the catalytic alpha-2 and alpha-3 subunits ATP1A2 and ATP1A3. Very little interaction with ATP1A1, ATP1A2 or ATP1A3 when phosphorylated at Ser-83. Interacts with the non-catalytic beta-1 subunit ATP1B1. Oxidative stress decreases interaction with ATP1A1 but increases interaction with ATP1B1. Major plasma membrane substrate for cAMP-dependent protein kinase (PKA) and protein kinase C (PKC) in several different tissues. Phosphorylated in response to insulin and adrenergic stimulation. Phosphorylation at Ser-88 stimulates sodium/potassium-transporting ATPase activity while the unphosphorylated form inhibits sodium/potassium-transporting ATPase activity. Phosphorylation increases tetramerization, decreases binding to ATP1A1 and reduces inhibition of ATP1A1 activity. Phosphorylation at Ser-83 leads to greatly reduced interaction with ATP1A1, ATP1A2 and ATP1A3. May be phosphorylated by DMPK. Post-translationally, palmitoylation increases half-life and stability and is enhanced upon phosphorylation at Ser-88 by PKA. In adult brain, highest levels are found in the cerebellum and in the lateral, third and fourth ventricles of the choroid plexus (at protein level). Also detected in cells of a portion of the ependymal lining of the lateral ventricle on its rostral surface posterior to the caudate putamen (at protein level). Expressed in a subset of neurons which secrete gonadotropin-releasing hormone.

Its subcellular location is the cell membrane. It localises to the sarcolemma. The protein resides in the apical cell membrane. The protein localises to the membrane. It is found in the caveola. Its subcellular location is the T-tubule. In terms of biological role, associates with and regulates the activity of the sodium/potassium-transporting ATPase (NKA) which transports Na(+) out of the cell and K(+) into the cell. Inhibits NKA activity in its unphosphorylated state and stimulates activity when phosphorylated. Reduces glutathionylation of the NKA beta-1 subunit ATP1B1, thus reversing glutathionylation-mediated inhibition of ATP1B1. Contributes to female sexual development by maintaining the excitability of neurons which secrete gonadotropin-releasing hormone. The sequence is that of Phospholemman from Rattus norvegicus (Rat).